Here is a 338-residue protein sequence, read N- to C-terminus: Glycerol-3-phosphate dehydrogenase [NAD(P)+] (338 aa).

NADPH-binding residues include Trp11, Arg30, and Lys109. Residues Lys109, Gly143, and Ser145 each coordinate sn-glycerol 3-phosphate. Ala147 contributes to the NADPH binding site. Sn-glycerol 3-phosphate-binding residues include Lys198, Asp251, Ser261, Arg262, and Asn263. Lys198 (proton acceptor) is an active-site residue. An NADPH-binding site is contributed by Arg262. Val286 and Glu288 together coordinate NADPH.

It belongs to the NAD-dependent glycerol-3-phosphate dehydrogenase family.

It localises to the cytoplasm. The enzyme catalyses sn-glycerol 3-phosphate + NAD(+) = dihydroxyacetone phosphate + NADH + H(+). It catalyses the reaction sn-glycerol 3-phosphate + NADP(+) = dihydroxyacetone phosphate + NADPH + H(+). Its pathway is membrane lipid metabolism; glycerophospholipid metabolism. Its function is as follows. Catalyzes the reduction of the glycolytic intermediate dihydroxyacetone phosphate (DHAP) to sn-glycerol 3-phosphate (G3P), the key precursor for phospholipid synthesis. This Cupriavidus taiwanensis (strain DSM 17343 / BCRC 17206 / CCUG 44338 / CIP 107171 / LMG 19424 / R1) (Ralstonia taiwanensis (strain LMG 19424)) protein is Glycerol-3-phosphate dehydrogenase [NAD(P)+].